Here is a 333-residue protein sequence, read N- to C-terminus: Serine/threonine-protein phosphatase 4 catalytic subunit 1 (333 aa).

The tract at residues Met-1 to Thr-29 is disordered. Polar residues predominate over residues Asp-7–Leu-27. Positions 79, 81, 107, and 139 each coordinate Mn(2+). His-140 (proton donor) is an active-site residue. Residues His-189 and His-264 each contribute to the Mn(2+) site. Leu-333 bears the Leucine methyl ester mark.

It belongs to the PPP phosphatase family. PP-4 (PP-X) subfamily. As to quaternary structure, serine/threonine-protein phosphatase 4 (PP4) occurs in different assemblies of the catalytic and one or more regulatory subunits. The regulatory subunits are likely to be ppfr-1, ppfr-2, ppfr-4 and smk-1. Interacts with mei-1. Mn(2+) serves as cofactor. Methylation at the C-terminal Leu-333 is critical for interactions with regulatory subunits.

The protein resides in the cytoplasm. The protein localises to the cytoskeleton. It is found in the microtubule organizing center. Its subcellular location is the centrosome. It catalyses the reaction O-phospho-L-seryl-[protein] + H2O = L-seryl-[protein] + phosphate. It carries out the reaction O-phospho-L-threonyl-[protein] + H2O = L-threonyl-[protein] + phosphate. In terms of biological role, protein phosphatase which plays an essential role in meiosis and in early embryonic mitosis. During spermatocyte meiosis and the first embryonic mitosis, regulates centrosome maturation, and thus spindle formation, by recruiting some of the components of the pericentriolar material (PCM). During oocyte meiosis I, regulates meiotic chromosome dynamics including synapsis-independent chromosome pairing, restriction of synapsis to homologous chromosomes, programmed DNA double-strand break initiation and crossover formation resulting in chiasma formation. During oocyte meiosis II and probably together with regulatory subunit ppfr-1, may regulate microtubule severing by dephosphorylating and activating mei-1, a component of the katanin microtubule severing complex. The chain is Serine/threonine-protein phosphatase 4 catalytic subunit 1 (pph-4.1) from Caenorhabditis briggsae.